The following is a 210-amino-acid chain: UPF0173 protein PYRAB01190 (210 aa).

This sequence belongs to the UPF0173 family.

This Pyrococcus abyssi (strain GE5 / Orsay) protein is UPF0173 protein PYRAB01190.